The chain runs to 169 residues: Fumarase E (169 aa).

It belongs to the MtlR/FumE family. In terms of assembly, homodimer.

It carries out the reaction (S)-malate = fumarate + H2O. In vitro catalyzes the addition of water to fumarate, forming malate. Cannot catalyze the reverse reaction. Cannot use the cis-isomer maleate as substrate. The protein is Fumarase E of Shigella flexneri.